A 467-amino-acid polypeptide reads, in one-letter code: Chromosomal replication initiator protein DnaA (467 aa).

The segment at 1–79 (MTELDQFWPA…GELPVELRLG (79 aa)) is domain I, interacts with DnaA modulators. The interval 79–129 (GAPTARPAAPVAGNSQPKAKEPAKAAASAPAAPSPAKQAAVKAIGGSHEST) is domain II. The interval 84 to 126 (RPAAPVAGNSQPKAKEPAKAAASAPAAPSPAKQAAVKAIGGSH) is disordered. The span at 102–121 (KAAASAPAAPSPAKQAAVKA) shows a compositional bias: low complexity. The domain III, AAA+ region stretch occupies residues 130 to 347 (RLNPSFTFDT…GALKRVVAYA (218 aa)). 4 residues coordinate ATP: G175, G177, K178, and T179. The tract at residues 348–467 (RFTSQNITLE…YEALLSMLRN (120 aa)) is domain IV, binds dsDNA.

The protein belongs to the DnaA family. In terms of assembly, oligomerizes as a right-handed, spiral filament on DNA at oriC.

The protein localises to the cytoplasm. Its function is as follows. Plays an essential role in the initiation and regulation of chromosomal replication. ATP-DnaA binds to the origin of replication (oriC) to initiate formation of the DNA replication initiation complex once per cell cycle. Binds the DnaA box (a 9 base pair repeat at the origin) and separates the double-stranded (ds)DNA. Forms a right-handed helical filament on oriC DNA; dsDNA binds to the exterior of the filament while single-stranded (ss)DNA is stabiized in the filament's interior. The ATP-DnaA-oriC complex binds and stabilizes one strand of the AT-rich DNA unwinding element (DUE), permitting loading of DNA polymerase. After initiation quickly degrades to an ADP-DnaA complex that is not apt for DNA replication. Binds acidic phospholipids. This is Chromosomal replication initiator protein DnaA from Chromobacterium violaceum (strain ATCC 12472 / DSM 30191 / JCM 1249 / CCUG 213 / NBRC 12614 / NCIMB 9131 / NCTC 9757 / MK).